We begin with the raw amino-acid sequence, 195 residues long: Probable cobalt-precorrin-6B C(15)-methyltransferase (decarboxylating) (195 aa).

S-adenosyl-L-methionine contacts are provided by residues threonine 24, 48–52 (GCGTG), aspartate 72, and alanine 101.

The protein belongs to the methyltransferase superfamily. Archaeal-type CbiT family.

It carries out the reaction Co-precorrin-6B + S-adenosyl-L-methionine = Co-precorrin-7 + S-adenosyl-L-homocysteine + CO2. It participates in cofactor biosynthesis; adenosylcobalamin biosynthesis; cob(II)yrinate a,c-diamide from sirohydrochlorin (anaerobic route): step 8/10. Catalyzes the methylation of C-15 in cobalt-precorrin-6B followed by the decarboxylation of C-12 to form cobalt-precorrin-7. The protein is Probable cobalt-precorrin-6B C(15)-methyltransferase (decarboxylating) of Pyrobaculum calidifontis (strain DSM 21063 / JCM 11548 / VA1).